The chain runs to 102 residues: Large ribosomal subunit protein uL24 (102 aa).

The protein belongs to the universal ribosomal protein uL24 family. In terms of assembly, part of the 50S ribosomal subunit.

One of two assembly initiator proteins, it binds directly to the 5'-end of the 23S rRNA, where it nucleates assembly of the 50S subunit. In terms of biological role, one of the proteins that surrounds the polypeptide exit tunnel on the outside of the subunit. In Burkholderia ambifaria (strain ATCC BAA-244 / DSM 16087 / CCUG 44356 / LMG 19182 / AMMD) (Burkholderia cepacia (strain AMMD)), this protein is Large ribosomal subunit protein uL24.